A 574-amino-acid chain; its full sequence is ATP-grasp enzyme fsqD (574 aa).

Positions Asn234–Val462 constitute an ATP-grasp domain. Ala263–Asp318 is a binding site for ATP. 3 residues coordinate Mg(2+): Glu394, Glu431, and Asn433. Mn(2+)-binding residues include Glu394, Glu431, and Asn433.

It depends on Mg(2+) as a cofactor. Requires Mn(2+) as cofactor.

It functions in the pathway secondary metabolite biosynthesis. Functionally, ATP-grasp enzyme; part of the gene cluster that mediates the biosynthesis of the isoquinoline alkaloids fumisoquin A, fumisoquin B and fumisoquin C; as well as small amounts of fumipyrrole as a shunt metabolite. The products of the cluster lead to a brown coloration and are important for growth and conidiation. The nonribosomal peptide synthetase-like protein fsqF, which lacks a canonical condensation domain, is required for addition of a serine-derived dehydroalanine moiety to activated tyrosine but is not essential for the subsequent steps leading to isoquinoline formation. A different enzyme, most likely the ATP-grasp enzyme fsqD, is responsible for activation of tyrosine. Three additional enzymes encoded by the fsq cluster, the N-methyltransferase fsqC, the phenol 2-monooxygenase fsqG and the FAD-dependent oxidase fsqB, catalyze the formation of the isoquinoline ring system in the fumisoquins. FsqB converts the fspF thiolation domain-bound (2S,4S,5S)-2-amino-6-(3,4-dihydroxyphenyl)-4-hydroxy-5-(methylamino)hexanoyl into isoquinoline. The cyclization most likely proceeds via a two-step mechanism, beginning with FAD-dependent oxidation of the methyl group to an iminium species followed by electrophilic attack on the deprotonated phenol. In Aspergillus fumigatus (strain ATCC MYA-4609 / CBS 101355 / FGSC A1100 / Af293) (Neosartorya fumigata), this protein is ATP-grasp enzyme fsqD.